The sequence spans 57 residues: MKKVILAFVATAFLAGCTTTGPAVVPVLDGKPRVPVNKSVPAKPPLAQPNPVDTYED.

An N-terminal signal peptide occupies residues 1–16 (MKKVILAFVATAFLAG). Residue C17 is the site of N-palmitoyl cysteine attachment. The S-diacylglycerol cysteine moiety is linked to residue C17. Positions 35 to 57 (PVNKSVPAKPPLAQPNPVDTYED) are disordered.

The protein localises to the cell membrane. Its function is as follows. The virB operon is essential for intracellular survival and is not involved in the invasion process. Constitutes a major determinant of virulence in mice. The chain is Type IV secretion system putative lipoprotein virB7 (virB7) from Brucella abortus (strain 2308).